The sequence spans 456 residues: MKKHTGTIISISGFVLKIEFNESDLPEISHALEYKTHQGTYLAEVVQHTGINTVSAIAIGEVSGLARGTEVVNLGHPIEVPVGESVQGRMLNVYGKAIDGKPEPEAEVKWPIFREQPLLRDLDTSKEILYTGIKVIDLICPILKGGKTGLFGGAGVGKSVLMQELINNISMMGGNSVFTGVGERVREGIGLYKELEASGVLSQTTVVLGQMNESPGVRMRVALTGLTIAEYLRDEEKKDVLLFIDNVFRFIQAGSEVSSLQGKIPITGGYQSTLSKEVGDFQDRIASTKDGSITSIQCVFLPADDIDDPSAVATFSHLDSTIVLERSIAALGIFPAVNPLQSFSRALNPNFVGERHYQLAVQVKYVLQRYTELQEIINVLGMAELSDDDKNLVHRARKIRNFLSQPFYVSEKFTGTEGIFVEMEDLLESIERILDGTYDDRSERDFLFIGSYKDLK.

152-159 contributes to the ATP binding site; it reads GGAGVGKS.

It belongs to the ATPase alpha/beta chains family. F-type ATPases have 2 components, CF(1) - the catalytic core - and CF(0) - the membrane proton channel. CF(1) has five subunits: alpha(3), beta(3), gamma(1), delta(1), epsilon(1). CF(0) has three main subunits: a(1), b(2) and c(9-12). The alpha and beta chains form an alternating ring which encloses part of the gamma chain. CF(1) is attached to CF(0) by a central stalk formed by the gamma and epsilon chains, while a peripheral stalk is formed by the delta and b chains.

The protein resides in the cell membrane. The catalysed reaction is ATP + H2O + 4 H(+)(in) = ADP + phosphate + 5 H(+)(out). Functionally, produces ATP from ADP in the presence of a proton gradient across the membrane. The catalytic sites are hosted primarily by the beta subunits. This is ATP synthase subunit beta 1 from Listeria welshimeri serovar 6b (strain ATCC 35897 / DSM 20650 / CCUG 15529 / CIP 8149 / NCTC 11857 / SLCC 5334 / V8).